We begin with the raw amino-acid sequence, 488 residues long: Glutamyl-tRNA(Gln) amidotransferase subunit A (488 aa).

Residues K77 and S152 each act as charge relay system in the active site. S176 functions as the Acyl-ester intermediate in the catalytic mechanism.

This sequence belongs to the amidase family. GatA subfamily. As to quaternary structure, heterotrimer of A, B and C subunits.

It catalyses the reaction L-glutamyl-tRNA(Gln) + L-glutamine + ATP + H2O = L-glutaminyl-tRNA(Gln) + L-glutamate + ADP + phosphate + H(+). In terms of biological role, allows the formation of correctly charged Gln-tRNA(Gln) through the transamidation of misacylated Glu-tRNA(Gln) in organisms which lack glutaminyl-tRNA synthetase. The reaction takes place in the presence of glutamine and ATP through an activated gamma-phospho-Glu-tRNA(Gln). This chain is Glutamyl-tRNA(Gln) amidotransferase subunit A, found in Streptococcus uberis (strain ATCC BAA-854 / 0140J).